A 310-amino-acid polypeptide reads, in one-letter code: Isoaspartyl peptidase/L-asparaginase (310 aa).

Catalysis depends on threonine 167, which acts as the Nucleophile. Substrate-binding positions include 195–198 (RVGD) and 218–221 (TGHG).

It belongs to the Ntn-hydrolase family. Heterodimer of an alpha and beta chain produced by autocleavage. Cleaved into an alpha and beta chain by autocatalysis; this activates the enzyme. The N-terminal residue of the beta subunit is responsible for the nucleophile hydrolase activity.

The protein resides in the cytoplasm. It carries out the reaction L-asparagine + H2O = L-aspartate + NH4(+). It catalyses the reaction Cleavage of a beta-linked Asp residue from the N-terminus of a polypeptide.. Has both L-asparaginase and beta-aspartyl peptidase activity. Does not have aspartylglucosaminidase activity and is inactive toward GlcNAc-L-Asn. Likewise, has no activity toward glutamine. In Danio rerio (Zebrafish), this protein is Isoaspartyl peptidase/L-asparaginase (asrgl1).